The primary structure comprises 156 residues: Transcription factor E (156 aa).

The HTH TFE/IIEalpha-type domain maps to 1 to 72; the sequence is MYGEKAKKVL…LWILNIDQIE (72 aa).

Belongs to the TFE family. Monomer. Interaction with RNA polymerase subunits RpoF and RpoE is necessary for Tfe stimulatory transcription activity. Able to interact with Tbp and RNA polymerase in the absence of DNA promoter. Interacts both with the preinitiation and elongation complexes.

In terms of biological role, transcription factor that plays a role in the activation of archaeal genes transcribed by RNA polymerase. Facilitates transcription initiation by enhancing TATA-box recognition by TATA-box-binding protein (Tbp), and transcription factor B (Tfb) and RNA polymerase recruitment. Not absolutely required for transcription in vitro, but particularly important in cases where Tbp or Tfb function is not optimal. It dynamically alters the nucleic acid-binding properties of RNA polymerases by stabilizing the initiation complex and destabilizing elongation complexes. Seems to translocate with the RNA polymerase following initiation and acts by binding to the non template strand of the transcription bubble in elongation complexes. The polypeptide is Transcription factor E (Staphylothermus marinus (strain ATCC 43588 / DSM 3639 / JCM 9404 / F1)).